Consider the following 320-residue polypeptide: MKIIFAGTPEFAATALAALLKTSHEIIAVYTQPDRKAGRGQKLTPSPVKQLALEHNIPVYQPLHFKASTEEGLAAQQELAALGADVMVVAAYGLILPQAVLDTPKYGCLNIHGSLLPRWRGAAPIQRAIATGDDETGITIMQMAAGLDTGDMMYKTYCPITSEDTSATLHDKLAAQGATAICAVLESEETLQKYLAEREVQDESLTVYAHKLVKSEARIDWSMNAVQVDRNIRAFNPWPVAFIQLDENNALRVWNSTISSQSKVNAQAGEIIAIDKQGVHVACGENTFICLTSVQWPGGKALNAQQIAQTQKLHVGQILP.

114 to 117 (SLLP) serves as a coordination point for (6S)-5,6,7,8-tetrahydrofolate.

It belongs to the Fmt family.

It carries out the reaction L-methionyl-tRNA(fMet) + (6R)-10-formyltetrahydrofolate = N-formyl-L-methionyl-tRNA(fMet) + (6S)-5,6,7,8-tetrahydrofolate + H(+). Its function is as follows. Attaches a formyl group to the free amino group of methionyl-tRNA(fMet). The formyl group appears to play a dual role in the initiator identity of N-formylmethionyl-tRNA by promoting its recognition by IF2 and preventing the misappropriation of this tRNA by the elongation apparatus. The sequence is that of Methionyl-tRNA formyltransferase from Acinetobacter baumannii (strain AB307-0294).